Consider the following 91-residue polypeptide: MDTYAIISFLLGIAFGFLRRGKEDRAKIIEVIFVSLLLGLVSGIALSHAVLDGAGWGEFVKAFGLIVAALIYAIFFAAGTYLGDLLEKLRK.

Transmembrane regions (helical) follow at residues 4–21, 28–50, and 60–82; these read YAIISFLLGIAFGFLRRG, IIEVIFVSLLLGLVSGIALSHAV, and VKAFGLIVAALIYAIFFAAGTYL.

Its subcellular location is the cell membrane. This is an uncharacterized protein from Archaeoglobus fulgidus (strain ATCC 49558 / DSM 4304 / JCM 9628 / NBRC 100126 / VC-16).